The sequence spans 246 residues: Putative L,D-transpeptidase YafK (246 aa).

Positions 1–19 are cleaved as a signal peptide; the sequence is MRKIALILAMLLIPCVSFA. Residues 44 to 174 form the L,D-TPase catalytic domain; that stretch reads VYIQIFKEER…GQPSVQVSIY (131 aa). The active-site Proton donor/acceptor is His-135. The Nucleophile role is filled by Cys-143.

It belongs to the YkuD family.

The protein operates within cell wall biogenesis; peptidoglycan biosynthesis. This Escherichia coli O157:H7 protein is Putative L,D-transpeptidase YafK (yafK).